The chain runs to 41 residues: Submaxillary gland androgen-regulated protein 2, isoform beta (41 aa).

A signal peptide spans 1–22 (MKALYMVFVLWVLIGCFLRLLK).

It localises to the secreted. May play a role in protection or detoxification. This chain is Submaxillary gland androgen-regulated protein 2, isoform beta (Smr2), found in Mus musculus (Mouse).